The following is a 181-amino-acid chain: Peptide deformylase 2 (181 aa).

Fe cation-binding residues include C109 and H151. E152 is an active-site residue. Residue H155 participates in Fe cation binding.

This sequence belongs to the polypeptide deformylase family. The cofactor is Fe(2+).

It catalyses the reaction N-terminal N-formyl-L-methionyl-[peptide] + H2O = N-terminal L-methionyl-[peptide] + formate. Removes the formyl group from the N-terminal Met of newly synthesized proteins. Requires at least a dipeptide for an efficient rate of reaction. N-terminal L-methionine is a prerequisite for activity but the enzyme has broad specificity at other positions. The protein is Peptide deformylase 2 of Shewanella oneidensis (strain ATCC 700550 / JCM 31522 / CIP 106686 / LMG 19005 / NCIMB 14063 / MR-1).